A 251-amino-acid chain; its full sequence is Probable-ribose 5-phosphate isomerase (251 aa).

The protein belongs to the ribose 5-phosphate isomerase family.

The catalysed reaction is aldehydo-D-ribose 5-phosphate = D-ribulose 5-phosphate. Its pathway is carbohydrate degradation; pentose phosphate pathway; D-ribose 5-phosphate from D-ribulose 5-phosphate (non-oxidative stage): step 1/1. This chain is Probable-ribose 5-phosphate isomerase (rpia-1), found in Caenorhabditis elegans.